The following is a 436-amino-acid chain: Kynureninase (436 aa).

Pyridoxal 5'-phosphate-binding positions include Leu88, Thr89, 116–119, Asp202, His205, and Tyr227; that span reads FPSD. The residue at position 228 (Lys228) is an N6-(pyridoxal phosphate)lysine. Pyridoxal 5'-phosphate contacts are provided by Trp280 and Asn308.

The protein belongs to the kynureninase family. As to quaternary structure, homodimer. Pyridoxal 5'-phosphate is required as a cofactor.

Its subcellular location is the cytoplasm. The catalysed reaction is L-kynurenine + H2O = anthranilate + L-alanine + H(+). It catalyses the reaction 3-hydroxy-L-kynurenine + H2O = 3-hydroxyanthranilate + L-alanine + H(+). The protein operates within amino-acid degradation; L-kynurenine degradation; L-alanine and anthranilate from L-kynurenine: step 1/1. It functions in the pathway cofactor biosynthesis; NAD(+) biosynthesis; quinolinate from L-kynurenine: step 2/3. In terms of biological role, catalyzes the cleavage of L-kynurenine (L-Kyn) and L-3-hydroxykynurenine (L-3OHKyn) into anthranilic acid (AA) and 3-hydroxyanthranilic acid (3-OHAA), respectively. This chain is Kynureninase, found in Schistosoma japonicum (Blood fluke).